Here is an 85-residue protein sequence, read N- to C-terminus: Antifungal protein (85 aa).

Positions M1–G18 are cleaved as a signal peptide. Repeat copies occupy residues Q19 to Q25 and Q67 to Q73. The interval Q19–Q73 is 2 X 7 AA repeats of Q-H-G-H-G-G-Q. The span at H22–H32 shows a compositional bias: gly residues. A disordered region spans residues H22–Y85. Basic and acidic residues predominate over residues G63–Y85.

As to quaternary structure, homodimer. The N-terminus is blocked. In terms of tissue distribution, hemolymph.

In terms of biological role, this protein inhibits the growth of a variety of fungal species. The antifungal activity of this protein is enhanced by the presence of sarcotoxin IA. This Sarcophaga peregrina (Flesh fly) protein is Antifungal protein.